Here is a 399-residue protein sequence, read N- to C-terminus: 5'-C-glycyluridine monooxygenase-decarboxylase (399 aa).

Phosphate is bound at residue Thr-179. Lys-230 is subject to N6-(pyridoxal phosphate)lysine. Positions 318, 322, 353, and 367 each coordinate phosphate.

This sequence belongs to the SelA family. As to quaternary structure, homooctamer; tetramer of homodimers. Requires pyridoxal 5'-phosphate as cofactor.

It catalyses the reaction (5'S,6'R)-C-glycyluridine + O2 = uridine-5'-carboxamide + CO2 + H2O. It participates in antibiotic biosynthesis. Activity is dependent on phosphate. Its function is as follows. Monooxygenase-decarboxylase involved in the biosynthesis of the capuramycin-type nucleoside antibiotic A-503083. Catalyzes the oxidative decarboxylation of 5'-C-glycyluridine (GlyU) to uridine-5'-carboxamide (CarU). Is stereospecific for the (5'S,6'R)-diastereomer of GlyU. Directly incorporates a single oxygen atom from O(2) into the product CarU. The protein is 5'-C-glycyluridine monooxygenase-decarboxylase of Streptomyces sp.